Here is a 352-residue protein sequence, read N- to C-terminus: Ion-translocating oxidoreductase complex subunit D (352 aa).

The next 4 helical transmembrane spans lie at 20–40 (IMLL…WFFG), 42–62 (GTLV…ALVL), 89–109 (IPPL…VIIA), and 123–143 (PAMI…TSWL). T187 carries the FMN phosphoryl threonine modification. A run of 5 helical transmembrane segments spans residues 214-234 (ILAG…GVWL), 242-262 (WHIP…GWLF), 267-287 (LASP…FFIL), 301-321 (LIFG…GGYP), and 322-342 (DGVA…DYYT).

It belongs to the NqrB/RnfD family. As to quaternary structure, the complex is composed of six subunits: RsxA, RsxB, RsxC, RsxD, RsxE and RsxG. Requires FMN as cofactor.

It is found in the cell inner membrane. Functionally, part of a membrane-bound complex that couples electron transfer with translocation of ions across the membrane. Required to maintain the reduced state of SoxR. The polypeptide is Ion-translocating oxidoreductase complex subunit D (Escherichia coli O17:K52:H18 (strain UMN026 / ExPEC)).